We begin with the raw amino-acid sequence, 380 residues long: Zinc metalloproteinase-like protein nas-21 (380 aa).

An N-terminal signal peptide occupies residues 1–24 (MNYFITFFFMHIAVLNFYFRFSNG). In terms of domain architecture, Peptidase M12A spans 46–234 (QALRMDNEPR…LMINEYYQCS (189 aa)). N87 carries N-linked (GlcNAc...) asparagine glycosylation. 2 disulfides stabilise this stretch: C90–C233 and C110–C130. E138 is an active-site residue. 4 N-linked (GlcNAc...) asparagine glycosylation sites follow: N253, N269, N283, and N304.

Its subcellular location is the secreted. Its function is as follows. May lack metalloprotease activity. In Caenorhabditis elegans, this protein is Zinc metalloproteinase-like protein nas-21 (nas-21).